We begin with the raw amino-acid sequence, 166 residues long: Small ribosomal subunit protein uS9 (166 aa).

The disordered stretch occupies residues 135–166 (KKAGFLTRDPRATERKKYGLKKARKAPQYSKR). The span at 142 to 151 (RDPRATERKK) shows a compositional bias: basic and acidic residues. Residues 152–166 (YGLKKARKAPQYSKR) show a composition bias toward basic residues.

This sequence belongs to the universal ribosomal protein uS9 family.

The polypeptide is Small ribosomal subunit protein uS9 (Mycolicibacterium paratuberculosis (strain ATCC BAA-968 / K-10) (Mycobacterium paratuberculosis)).